The following is a 263-amino-acid chain: MDQFVFSGGSEGGGELGGDRERDSLTPELGRFEHLIFNMQKYFCEFFAALVIVSAVAFGLAKEGGAQAAPLSITSTIFALITLFKDISGAHFNPAVSCTIYMTDPRFTLVDLLCYVAAQLIGGTVGAFIGYGIMGKALDILPLDPGMSASRQLFHEVIPTMVMIYAVLVLVFGYGVMWELTVPFVVGACVLAGAFAGATMNPAVTFGIFISNICTKNTNIDVAALLVTLFGPFLGAMFAFLGYVGTHAYHNPVPLRFLNFRGL.

A disordered region spans residues 1–22 (MDQFVFSGGSEGGGELGGDRER). The next 6 helical transmembrane spans lie at 41-61 (KYFC…FGLA), 64-84 (GGAQ…ITLF), 113-133 (LCYV…GYGI), 157-177 (VIPT…YGVM), 180-200 (LTVP…GATM), and 222-242 (VAAL…AFLG).

This sequence belongs to the MIP/aquaporin (TC 1.A.8) family. As to quaternary structure, multimer.

The protein resides in the vacuole membrane. It carries out the reaction H2O(in) = H2O(out). The catalysed reaction is glycerol(in) = glycerol(out). The enzyme catalyses urea(in) = urea(out). In terms of biological role, mediates water and glycerol transport across cell membranes. Permeable to selected sugar alcohols of up to five carbons and urea. Permeable to methylamine/methylammonium. The protein is Aquaglyceroporin of Toxoplasma gondii (strain ATCC 50611 / Me49).